A 3477-amino-acid chain; its full sequence is Abnormal spindle-like microcephaly-associated protein (3477 aa).

Positions 1–30 are disordered; sequence MANRRVGRGCWEVSPTERRPPAGLRGPAAE. 4 positions are modified to phosphoserine: S280, S283, S367, and S392. The interval 308–409 is sufficient for interaction with KATNA1:KATNB1; the sequence is ITQSQIHFLS…NMAYMCTSQQ (102 aa). The segment covering 415-424 has biased composition (polar residues); it reads LSNENSQVPQ. 2 disordered regions span residues 415 to 443 and 559 to 581; these read LSNE…ECQG and KNEV…DGSM. S425 carries the phosphoserine modification. Residues 560–570 are compositionally biased toward polar residues; that stretch reads NEVTPSSTTAS. Phosphoserine is present on S605. Positions 920–1056 constitute a Calponin-homology (CH) 1 domain; it reads KASKEILLAF…LLWKIAFAFQ (137 aa). The stretch at 1057–1078 forms a coiled coil; that stretch reads VDISLNLDQLKEEIAFLKHTKS. S1103 is modified (phosphoserine). In terms of domain architecture, Calponin-homology (CH) 2 spans 1110–1261; sequence SENIKLLMDW…YLSFLCARLL (152 aa). IQ domains are found at residues 1347 to 1378, 1393 to 1422, 1582 to 1613, 1632 to 1661, 1655 to 1684, 1728 to 1757, 1751 to 1782, 1801 to 1830, 1824 to 1853, 1874 to 1903, 1897 to 1928, 1947 to 1978, 1970 to 2001, 2020 to 2049, 2043 to 2074, 2093 to 2124, 2116 to 2147, 2166 to 2197, 2189 to 2218, 2239 to 2270, 2262 to 2293, 2311 to 2342, 2334 to 2365, 2384 to 2415, 2407 to 2438, 2457 to 2488, 2530 to 2561, 2624 to 2653, 2665 to 2696, 2688 to 2719, 2738 to 2767, 2859 to 2890, 2909 to 2938, 2932 to 2963, 2954 to 2985, 3029 to 3060, 3079 to 3110, 3181 to 3210, and 3204 to 3235; these read QNKA…IILQ, YLWA…MLKS, LKKT…VIIQ, TRSA…SVIK, ILTS…ATIK, MRES…AVIS, QRKA…IVIQ, VKKA…AALK, QSIA…SIIK, TKAA…AALK, EHQA…LVIQ, LRHA…IIIQ, QHKC…LLIQ, TKAA…AAVT, CNKA…IIIQ, LKKT…TFIK, MHRA…IVIQ, ILKA…TLIQ, MQTA…ITKT, LRHS…TLIQ, MHIA…ILIQ, VQNA…TFIQ, MHRA…VVIQ, QRHS…TLIQ, MHSS…IFVQ, LRKA…VLIQ, QWHS…IVIQ, QHQA…TVVS, RTQA…TLIQ, VQKS…EKMA, QKRA…VVLQ, IRSS…STIK, IKNS…KIQA, KVKA…KIIQ, RHRA…LIIQ, FKKS…RLLH, RNRA…GIIK, and FTSG…IRLS.

In terms of assembly, interacts with KATNA1 and KATNB1; katanin complex formation KATNA1:KATNB1 is required for the association.

The protein resides in the cytoplasm. Its subcellular location is the cytoskeleton. It is found in the spindle. It localises to the nucleus. In terms of biological role, involved in mitotic spindle regulation and coordination of mitotic processes. The function in regulating microtubule dynamics at spindle poles including spindle orientation, astral microtubule density and poleward microtubule flux seems to depend on the association with the katanin complex formed by KATNA1 and KATNB1. Enhances the microtubule lattice severing activity of KATNA1 by recruiting the katanin complex to microtubules. Can block microtubule minus-end growth and reversely this function can be enhanced by the katanin complex. May have a preferential role in regulating neurogenesis. The sequence is that of Abnormal spindle-like microcephaly-associated protein (ASPM) from Homo sapiens (Human).